Reading from the N-terminus, the 143-residue chain is Large ribosomal subunit protein uL15 (143 aa).

A disordered region spans residues 1-56 (MQLNSIKPAAGAKHAKRRVGRGIGSGLGKTAGRGHKGQKSRAGGYHKVGFEGGQMP). A compositionally biased stretch (gly residues) spans 21–31 (RGIGSGLGKTA).

Belongs to the universal ribosomal protein uL15 family. As to quaternary structure, part of the 50S ribosomal subunit.

In terms of biological role, binds to the 23S rRNA. The polypeptide is Large ribosomal subunit protein uL15 (Verminephrobacter eiseniae (strain EF01-2)).